Reading from the N-terminus, the 404-residue chain is Chorismate synthase (404 aa).

NADP(+) is bound at residue arginine 47. FMN is bound by residues 156 to 158 (RSS), 281 to 282 (NA), glycine 321, 336 to 340 (KPTST), and arginine 363.

It belongs to the chorismate synthase family. In terms of assembly, homotetramer. FMNH2 is required as a cofactor.

The catalysed reaction is 5-O-(1-carboxyvinyl)-3-phosphoshikimate = chorismate + phosphate. It participates in metabolic intermediate biosynthesis; chorismate biosynthesis; chorismate from D-erythrose 4-phosphate and phosphoenolpyruvate: step 7/7. Its function is as follows. Catalyzes the anti-1,4-elimination of the C-3 phosphate and the C-6 proR hydrogen from 5-enolpyruvylshikimate-3-phosphate (EPSP) to yield chorismate, which is the branch point compound that serves as the starting substrate for the three terminal pathways of aromatic amino acid biosynthesis. This reaction introduces a second double bond into the aromatic ring system. This chain is Chorismate synthase, found in Rhodopirellula baltica (strain DSM 10527 / NCIMB 13988 / SH1).